The primary structure comprises 388 residues: Probable protein phosphatase 2C 43 (388 aa).

The region spanning 53–352 (EFSFAVVQAN…DDITVVVVFI (300 aa)) is the PPM-type phosphatase domain. Residues D84, G85, D284, and D343 each contribute to the Mn(2+) site.

This sequence belongs to the PP2C family. Requires Mg(2+) as cofactor. Mn(2+) is required as a cofactor.

The enzyme catalyses O-phospho-L-seryl-[protein] + H2O = L-seryl-[protein] + phosphate. It carries out the reaction O-phospho-L-threonyl-[protein] + H2O = L-threonyl-[protein] + phosphate. This is Probable protein phosphatase 2C 43 from Oryza sativa subsp. japonica (Rice).